Reading from the N-terminus, the 96-residue chain is MAEVEETLKRIQSHKGVIGTMVVNAEGIPIRTTLDNSTTVQYAGLLHQLTMKAKSTVRDIDPQNDLTFLRIRSKKHEIMVAPDKEYLLIVIQNPCE.

N-acetylalanine is present on A2.

The protein belongs to the GAMAD family. As to quaternary structure, homodimer. The cytoplasmic dynein 1 complex consists of two catalytic heavy chains (HCs) and a number of non-catalytic subunits presented by intermediate chains (ICs), light intermediate chains (LICs) and light chains (LCs); the composition seems to vary in respect to the IC, LIC and LC composition. The heavy chain homodimer serves as a scaffold for the probable homodimeric assembly of the respective non-catalytic subunits. The ICs and LICs bind directly to the HC dimer and the LCs assemble on the IC dimer. Interacts with DYNC1I1 and DYNC1I2. Self-associates. Interacts with DYNLRB1.

It localises to the cytoplasm. The protein localises to the cytoskeleton. In terms of biological role, acts as one of several non-catalytic accessory components of the cytoplasmic dynein 1 complex that are thought to be involved in linking dynein to cargos and to adapter proteins that regulate dynein function. Cytoplasmic dynein 1 acts as a motor for the intracellular retrograde motility of vesicles and organelles along microtubules. The protein is Dynein light chain roadblock-type 2 (DYNLRB2) of Bos taurus (Bovine).